The primary structure comprises 465 residues: MLMLWTFAVLLGAVAGREVCFDKLGCFSDDAPWSGTLDRPLKALPWSPAQINTRFLLYTNENPDNYQLITSDASNIRNSNFRTNRKTRIIIHGFIDKGEENWLSDMCKNMFRVESVNCICVDWKGGSRTTYTQATQNVRVVGAEVALLVNVLQSDLGYSLNNVHLIGHSLGSHIAGEAGKRTFGAIGRITGLDPAEPYFQGTPEEVRLDPTDAQFVDAIHTDAGPIIPNLGFGMSQTVGHLDFFPNGGIEMPGCQKNILSQIVDIDGIWEGTRNFAACNHLRSYKFYTDSIVNPTGFAGFSCSSYSLFTANKCFPCGSGGCPQMGHYADRYPGKTSRLYQTFYLNTGDKSNFARWRYQVTVTLSGQKVTGHILVSLFGNGGNSKQYEVFKGSLQPGTSHVNEFDSDVDVGDLQKVKFIWYNNVINPTLPKVGASRITVERNDGRVFNFCSQETVREDVLLTLSPC.

The N-terminal stretch at 1–16 (MLMLWTFAVLLGAVAG) is a signal peptide. Cystine bridges form between C20–C26 and C107–C118. Residue S169 is the Nucleophile of the active site. D193 (charge relay system) is an active-site residue. Ca(2+)-binding residues include E204, R207, D209, and D212. C254 and C278 are oxidised to a cystine. H280 functions as the Charge relay system in the catalytic mechanism. Disulfide bonds link C302–C313, C316–C321, and C449–C465. The 111-residue stretch at 355–465 (WRYQVTVTLS…EDVLLTLSPC (111 aa)) folds into the PLAT domain.

It belongs to the AB hydrolase superfamily. Lipase family. Forms a 1:1 stoichiometric complex with (pro)colipase/CLPS. As to expression, pancreas.

It is found in the secreted. The enzyme catalyses a triacylglycerol + H2O = a diacylglycerol + a fatty acid + H(+). It carries out the reaction 1,2,3-tri-(9Z-octadecenoyl)-glycerol + H2O = di-(9Z)-octadecenoylglycerol + (9Z)-octadecenoate + H(+). The catalysed reaction is 1,2,3-tributanoylglycerol + H2O = dibutanoylglycerol + butanoate + H(+). It catalyses the reaction all-trans-retinyl hexadecanoate + H2O = all-trans-retinol + hexadecanoate + H(+). The enzyme catalyses 1,2-di-(9Z-octadecenoyl)-glycerol + H2O = (9Z-octadecenoyl)-glycerol + (9Z)-octadecenoate + H(+). With respect to regulation, inhibited by bile salts, is reactivated by (pro)colipase/CLPS. Plays an important role in fat metabolism. It preferentially splits the esters of long-chain fatty acids at positions 1 and 3, producing mainly 2-monoacylglycerol and free fatty acids, and shows considerably higher activity against insoluble emulsified substrates than against soluble ones. The sequence is that of Pancreatic triacylglycerol lipase from Mus musculus (Mouse).